The following is a 321-amino-acid chain: MLRFTGARAIRKYSTRYALEHLKEGAPLKGLFSIEGLQKAWFDRVKYLDAKLNDCTNEAQQKPLETLIHENSKSASKKHIVNYASSLYNLKFSMSSLQGCIRTPPEECPRLGPEALLQTPDFNRTISNEPLTTGNERLQAALISSFGSLMEFRTLLINSNLAISGDGFTWLVARRQLDKRAMRNDMPNRDIEYDKLFILNTYNAGTPFNFSTSGVMNELNNQYTNMEKQRAKEAGNLEDSEMTAKQAKTKFIYETQQKGFSGKEVSYIPLLAIDASPKTWLTDYGVFGKREYLERVWDSIEWKIVESRLPQRTKIQAFNTL.

A mitochondrion-targeting transit peptide spans 1 to 13 (MLRFTGARAIRKY).

Belongs to the mitochondrion-specific ribosomal protein mS43 family. Component of the mitochondrial small ribosomal subunit (mt-SSU). Mature yeast 74S mitochondrial ribosomes consist of a small (37S) and a large (54S) subunit. The 37S small subunit contains a 15S ribosomal RNA (15S mt-rRNA) and 34 different proteins. The 54S large subunit contains a 21S rRNA (21S mt-rRNA) and 46 different proteins. mS43 forms a heterodimer with mS42, building a large protuberance adjacent to the mRNA channel exit in the mt-SSU body.

It localises to the mitochondrion. Functionally, component of the mitochondrial ribosome (mitoribosome), a dedicated translation machinery responsible for the synthesis of mitochondrial genome-encoded proteins, including at least some of the essential transmembrane subunits of the mitochondrial respiratory chain. The mitoribosomes are attached to the mitochondrial inner membrane and translation products are cotranslationally integrated into the membrane. The polypeptide is Small ribosomal subunit protein mS43 (MRP1) (Saccharomyces cerevisiae (strain ATCC 204508 / S288c) (Baker's yeast)).